The sequence spans 488 residues: 1-hydroxycarotenoid 3,4-desaturase (488 aa).

FAD is bound by residues glutamate 31, lysine 39, serine 55 to leucine 56, valine 247, asparagine 275, leucine 431, glycine 461, and glycine 468 to isoleucine 469.

It belongs to the carotenoid/retinoid oxidoreductase family. In terms of assembly, monomer.

The enzyme catalyses rhodopin + A = (3E)-3,4-didehydrorhodopin + AH2. It carries out the reaction 1'-hydroxy-gamma-carotene + A = 1'-hydroxytorulene + AH2. The catalysed reaction is 1-hydroxy-all-trans-1,2-dihydro-neurosporene + A = demethylspheroidene + AH2. It catalyses the reaction 1,1'-dihydroxy-1,1',2,2'-tetrahydroneurosporene + A = 1'-hydroxy-demethylspheroidene + AH2. The enzyme catalyses 1,1'-dihydroxy-1,1',2,2'-tetrahydrolycopene + A = 1,1'-dihydroxy-3,4-didehydro-1,2-dihydrolycopene + AH2. Its pathway is carotenoid biosynthesis. In terms of biological role, catalyzes the introduction of a C-3,4 double bond into 1'-hydroxy-gamma-carotene and rhodopin (1-hydroxylycopene) to yield 1'-hydroxytorulene and (3E)-3,4-didehydrorhodopin, respectively. Can also 1-hydroxy-all-trans-1,2-dihydro-neurosporene, 1,1'-dihydroxy-1,1',2,2'-tetrahydroneurosporene and 1,1'-dihydroxy-1,1',2,2'-tetrahydrolycopene. Probably involved in the synthesis of myxol, a gamma-carotene derivative. May use FAD as a proton acceptor. The chain is 1-hydroxycarotenoid 3,4-desaturase from Flavobacterium sp. (strain P99-3).